We begin with the raw amino-acid sequence, 86 residues long: Small ribosomal subunit protein bS20 (86 aa).

Belongs to the bacterial ribosomal protein bS20 family.

Its function is as follows. Binds directly to 16S ribosomal RNA. The sequence is that of Small ribosomal subunit protein bS20 from Kocuria rhizophila (strain ATCC 9341 / DSM 348 / NBRC 103217 / DC2201).